Consider the following 708-residue polypeptide: B-cell lymphoma 6 protein homolog (708 aa).

The BTB domain maps to 32–99; it reads TDVVIIVNRE…MYTSRLNLRE (68 aa). Residues 303–317 show a composition bias toward basic and acidic residues; the sequence is AKEEERTSSEDEISQ. 2 disordered regions span residues 303 to 371 and 431 to 470; these read AKEE…KSPT and PTKM…QSPL. Composition is skewed to polar residues over residues 333–370 and 431–454; these read SPQS…TKSP and PTKM…NIVN. C2H2-type zinc fingers lie at residues 520-543, 548-570, 576-598, 604-626, 632-654, and 660-683; these read FFCN…LQVH, YKCD…KTVH, YRCN…TRIH, YKCE…VLIH, YPCE…LRIH, and YHCE…RQKH.

It localises to the nucleus. In terms of biological role, transcriptional repressor mainly required for germinal center (GC) formation and antibody affinity maturation which has different mechanisms of action specific to the lineage and biological functions. Forms complexes with different corepressors and histone deacetylases to repress the transcriptional expression of different subsets of target genes. Represses its target genes by binding directly to the DNA sequence 5'-TTCCTAGAA-3' (BCL6-binding site) or indirectly by repressing the transcriptional activity of transcription factors. In GC B-cells, represses genes that function in differentiation, inflammation, apoptosis and cell cycle control, also autoregulates its transcriptional expression and up-regulates, indirectly, the expression of some genes important for GC reactions, such as AICDA, through the repression of microRNAs expression. An important function is to allow GC B-cells to proliferate very rapidly in response to T-cell dependent antigens and tolerate the physiological DNA breaks required for immunglobulin class switch recombination and somatic hypermutation without inducing a p53/TP53-dependent apoptotic response. In follicular helper CD4(+) T-cells (T(FH) cells), promotes the expression of T(FH)-related genes but inhibits the differentiation of T(H)1, T(H)2 and T(H)17 cells. Also required for the establishment and maintenance of immunological memory for both T- and B-cells. Suppresses macrophage proliferation through competition with STAT5 for STAT-binding motifs binding on certain target genes, such as CCL2 and CCND2. In response to genotoxic stress, controls cell cycle arrest in GC B-cells in both p53/TP53-dependedent and -independent manners. Besides, also controls neurogenesis through the alteration of the composition of NOTCH-dependent transcriptional complexes at selective NOTCH targets, such as HES5, including the recruitment of the deacetylase SIRT1 and resulting in an epigenetic silencing leading to neuronal differentiation. The sequence is that of B-cell lymphoma 6 protein homolog from Gallus gallus (Chicken).